The following is a 387-amino-acid chain: MEQVVIVDAIRTPMGRSKGGAFRNERAEDLSAHLMRSLLARNPSLTAATLDDIYWGCVQQTLEQGFNIARNAALLAEIPHSVPAVTVNRLCGSSMQALHDAARMIMTGDAQVCLVGGVEHMGHVPMSHGVDFHPGLSRNVAKAAGMMGLTAEMLSRLHGISREMQDQFAARSHARAWAATQSGAFKTEIIPTGGHDADGVLKQFNYDEVIRPETTVEALSTLRPAFDPVSGTVTAGTSSALSDGAAAMLVMSESRARELGLKPRARIRSMAVVGCDPSIMGYGPVPASKLALKKAGLSASDIDVFEMNEAFAAQILPCIKDLGLMEQIDEKINLNGGAIALGHPLGCSGARISTTLINLMERKDAQFGLATMCIGLGQGIATVFERV.

The active-site Acyl-thioester intermediate is the Cys91. Residues His343 and Cys373 each act as proton acceptor in the active site.

The protein belongs to the thiolase-like superfamily. Thiolase family. As to quaternary structure, heterotetramer of two alpha chains (FadB) and two beta chains (FadA).

It localises to the cytoplasm. The enzyme catalyses an acyl-CoA + acetyl-CoA = a 3-oxoacyl-CoA + CoA. The protein operates within lipid metabolism; fatty acid beta-oxidation. Catalyzes the final step of fatty acid oxidation in which acetyl-CoA is released and the CoA ester of a fatty acid two carbons shorter is formed. This Salmonella choleraesuis (strain SC-B67) protein is 3-ketoacyl-CoA thiolase.